The sequence spans 418 residues: Glutamyl-tRNA reductase (418 aa).

Residues 49 to 52 (TCNR), Ser107, 112 to 114 (EPQ), and Gln118 each bind substrate. Cys50 functions as the Nucleophile in the catalytic mechanism. 187-192 (GAGETI) lines the NADP(+) pocket.

Belongs to the glutamyl-tRNA reductase family. In terms of assembly, homodimer.

The catalysed reaction is (S)-4-amino-5-oxopentanoate + tRNA(Glu) + NADP(+) = L-glutamyl-tRNA(Glu) + NADPH + H(+). It functions in the pathway porphyrin-containing compound metabolism; protoporphyrin-IX biosynthesis; 5-aminolevulinate from L-glutamyl-tRNA(Glu): step 1/2. Functionally, catalyzes the NADPH-dependent reduction of glutamyl-tRNA(Glu) to glutamate 1-semialdehyde (GSA). The sequence is that of Glutamyl-tRNA reductase from Vibrio campbellii (strain ATCC BAA-1116).